The chain runs to 299 residues: B-box zinc finger protein 22 (299 aa).

Positions 5, 8, 28, 33, 57, 60, 80, and 85 each coordinate Zn(2+). Residues 5–47 form a B box-type 1; atypical zinc finger; sequence CNVCEAAEATVLCCADEAALCWACDEKIHAANKLAGKHQRVPL. A B box-type 2; atypical zinc finger spans residues 57 to 99; sequence CDICQEASGFFFCLQDRALLCRKCDVAIHTVNPHVSAHQRFLL. Disordered stretches follow at residues 143-181 and 206-299; these read FDHH…GSTT and ENNG…RRRF. 3 stretches are compositionally biased toward polar residues: residues 164 to 181, 251 to 260, and 277 to 290; these read VNDQ…GSTT, QIQSPPTASG, and ITSS…SPNQ.

Interacts with HY5. Post-translationally, ubiquitinated by COP1 in vitro. COP1-mediated degradation of BBX22 by the proteasome occurs in the dark and is important for a precise skotomorphogenesis process and optimization of seedling growth under short days conditions.

It is found in the nucleus. Acts as a positive regulator of seedling photomorphogenesis and light-regulated inhibition of hypocotyl elongation, independently and in concert with HY5 and BBX21. Acts as a positive regulator of de-etiolation and influences chloroplast biogenesis and function through regulation of genes encoding chloroplast proteins. Acts downstream of COP1 and plays an important role in early and long-term adjustment of the shade avoidance syndrome (SAS) responses in natural environments. Regulates the expression of genes responsive to light hormone signals which may contribute to optimal seedling development. The chain is B-box zinc finger protein 22 from Arabidopsis thaliana (Mouse-ear cress).